The chain runs to 494 residues: Lysine--tRNA ligase (494 aa).

Mg(2+)-binding residues include E407 and E414.

The protein belongs to the class-II aminoacyl-tRNA synthetase family. As to quaternary structure, homodimer. Requires Mg(2+) as cofactor.

The protein localises to the cytoplasm. It catalyses the reaction tRNA(Lys) + L-lysine + ATP = L-lysyl-tRNA(Lys) + AMP + diphosphate. The protein is Lysine--tRNA ligase of Lactococcus lactis subsp. cremoris (strain MG1363).